The following is an 871-amino-acid chain: MSKRPAGSHMEHNDLTDASIIRIPPHHYIHVLDQNTNIARVEVGPLTYIRQDNERVLFSPTRMTMVPPRHYCVILNPVARDDEGHVQFDTAGQAKLRHADLEIRLTQDPFPLYPGEEIQKEVTPLQIVYPDTALRLQALLDFEEESGEKRVAGDEWLFEGPGTYIPRKEVAVLEIIKATVIREHQAIRLRARKEGVDRSGTRRVTGEEWQVSKVGAYLPGAHEEVIDIVNAFILTDKRALHVRALRPFRDAGGRDRRTGEEWLVTVADREAHIPSVAEEVVGVVDVTTLNSREYCVILDPVGPDGKPQLGQKRVVKGERSFFLRPGEHLENGIQDVYVLSEEEGLVLRAVEAFNDTEAQEEDEEEEEEEEQAKKTSVQRRPGDRWMLRGPIEYVPPVTVEVMLRRQAIPLDENEGIYVRDIKTGKVRAVIGHTYMLTHDEELWEKELPPNVEKLLSTVRDPLADRSEHNQNAVAEPRDKTMVVSYRVPHNAAVQVYDYREKKARVVFGPDLVMLGPDEQFTVLSLSGEKPKRANVIKAICLLLGPDFCTDIITIETADHARLQLQLAYNWHFEVKNHSDPAQAAALFSVPDFVGDACKAIASRIRGAVASVQFDDFHKNSIRIICSAVFGFDEKLAVRSSLRFNQNGLVISSVDIQSVEPVDQRTRDALQKSVQLAIEITTNSQEATARHEAERLEQEARGKLERQKITDQAEAERARKELLELEALSAAVESTGAAKAEAQSRAEAARIQGEAAVQEAKLKVEALRIEAEAEMVRLAKAREQELLYKKELDHLEVEKQQKLVTIESQRFKQLVEAIGSETLTAMARAGPELQVKMLQALGLKSTLITDGSSPINLFTTANGLLGAMKAPE.

9 MVP repeats span residues 2–69 (SKRP…VPPR), 70–124 (HYCV…EVTP), 125–177 (LQIV…EIIK), 178–230 (ATVI…DIVN), 231–285 (AFIL…GVVD), 286–336 (VTTL…IQDV), 337–407 (YVLS…RRQA), 408–482 (IPLD…KTMV), and 483–545 (VSYR…LLGP). The disordered stretch occupies residues 356-381 (TEAQEEDEEEEEEEEQAKKTSVQRRP). The span at 357-370 (EAQEEDEEEEEEEE) shows a compositional bias: acidic residues. The disordered stretch occupies residues 684–710 (QEATARHEAERLEQEARGKLERQKITD). Over residues 687–710 (TARHEAERLEQEARGKLERQKITD) the composition is skewed to basic and acidic residues. The IQ domain occupies 688–717 (ARHEAERLEQEARGKLERQKITDQAEAERA).

As to quaternary structure, the vault ribonucleoprotein particle is a huge (400 A x 670 A) cage structure of 12.9 MDa. It consists of a dimer of half-vaults, with each half-vault comprising 39 identical major vault protein (MVP) chains, PARP4 and one or more vault RNAs (vRNAs).

Its subcellular location is the cytoplasm. It is found in the nucleus. In terms of biological role, required for normal vault structure. Vaults are multi-subunit structures that may act as scaffolds for proteins involved in signal transduction. Vaults may also play a role in nucleo-cytoplasmic transport. This Ictalurus punctatus (Channel catfish) protein is Major vault protein (mvp).